A 584-amino-acid polypeptide reads, in one-letter code: Interferon regulatory factor 2-binding protein 1 (584 aa).

The tract at residues 59–120 (HVLPEGRSPG…RYDRATSSSR (62 aa)) is disordered. The residue at position 66 (Ser-66) is a Phosphoserine. Residues 82–100 (STGSQGSQLPPPQAQAQPS) are compositionally biased toward low complexity. A Phosphoserine modification is found at Ser-125. Position 177 is an omega-N-methylarginine (Arg-177). Residue Ser-186 is modified to Phosphoserine. Residues 197–217 (EKEKQQRNADCLAELNEAMRG) adopt a coiled-coil conformation. Residue Lys-227 forms a Glycyl lysine isopeptide (Lys-Gly) (interchain with G-Cter in SUMO2) linkage. Disordered regions lie at residues 346-421 (PAEA…GVPS) and 433-495 (LGHS…GTGA). Positions 354 to 369 (YPEPAPAALCGPPPRA) are enriched in pro residues. 4 positions are modified to phosphoserine: Ser-371, Ser-384, Ser-421, and Ser-436. Lys-438 participates in a covalent cross-link: Glycyl lysine isopeptide (Lys-Gly) (interchain with G-Cter in SUMO2). The span at 449–458 (AGGASPAASS) shows a compositional bias: low complexity. Phosphoserine is present on residues Ser-453 and Ser-457. The RING-type; degenerate zinc-finger motif lies at 503 to 550 (CTLCRERLEDTHFVQCPSVPGHKFCFPCSREFIKAQGPAGEVYCPSGD). Residues 503 to 550 (CTLCRERLEDTHFVQCPSVPGHKFCFPCSREFIKAQGPAGEVYCPSGD) are cys-rich.

Belongs to the IRF2BP family. Interacts with IRF2. Part of a corepressor complex containing IRF2 and IRF2BP2. Interacts with JDP2.

The protein resides in the nucleus. The enzyme catalyses S-ubiquitinyl-[E2 ubiquitin-conjugating enzyme]-L-cysteine + [acceptor protein]-L-lysine = [E2 ubiquitin-conjugating enzyme]-L-cysteine + N(6)-ubiquitinyl-[acceptor protein]-L-lysine.. Acts as a transcriptional corepressor in a IRF2-dependent manner; this repression is not mediated by histone deacetylase activities. May act as an E3 ligase towards JDP2, enhancing its polyubiquitination. Represses ATF2-dependent transcriptional activation. This Mus musculus (Mouse) protein is Interferon regulatory factor 2-binding protein 1 (Irf2bp1).